The following is a 547-amino-acid chain: Delta-guaiene synthase 2 (547 aa).

3 residues coordinate Mg(2+): Asp299, Asp303, and Asp444. The DDXXD motif motif lies at 299–303 (DDTYD).

Belongs to the terpene synthase family. Mg(2+) is required as a cofactor.

It catalyses the reaction (2E,6E)-farnesyl diphosphate = delta-guaiene + diphosphate. The catalysed reaction is (2E,6E)-farnesyl diphosphate = alpha-guaiene + diphosphate. Its pathway is secondary metabolite biosynthesis; terpenoid biosynthesis. Its function is as follows. Sesquiterpene synthase involved in the biosynthesis of delta-guaiene (53.7%) and alpha-guaiene (44.6%), two structures composed of five- and seven-membered rings. Also produces 1.7% of alpha-humulene. This chain is Delta-guaiene synthase 2 (C3), found in Aquilaria crassna (Eagle wood).